A 413-amino-acid polypeptide reads, in one-letter code: Divalent metal cation transporter MntH (413 aa).

The Cytoplasmic portion of the chain corresponds to 1–19 (MTDNRVENSSGRAARKLRL). A helical transmembrane segment spans residues 20–39 (ALMGPAFIAAIGYIDPGNFA). Topologically, residues 40–51 (TNIQAGASFGYQ) are periplasmic. Residues 52–71 (LLWVVVWANLMAMLIQILSA) traverse the membrane as a helical segment. Residues 72-95 (KLGIATGKNLAEQIRDHYPRPVVW) are Cytoplasmic-facing. The helical transmembrane segment at 96–118 (FYWVQAEIIAMATDLAEFIGAAI) threads the bilayer. The Periplasmic portion of the chain corresponds to 119 to 125 (GFKLILG). The chain crosses the membrane as a helical span at residues 126–145 (VSLLQGAVLTGIATFLILML). At 146–155 (QRRGQKPLEK) the chain is on the cytoplasmic side. The helical transmembrane segment at 156-175 (VIGGLLLFVAAAYIVELFFS) threads the bilayer. Residues 176-196 (QPDMAQLGKGMVIPALPNPEA) lie on the Periplasmic side of the membrane. The helical transmembrane segment at 197 to 220 (VFLAAGVLGATIMPHVIYLHSSLT) threads the bilayer. Topologically, residues 221-238 (QHLHGGTRQQRYSATKWD) are cytoplasmic. Residues 239-258 (VAIAMTIAGFVNLAMMATAA) form a helical membrane-spanning segment. At 259 to 276 (AAFHFSGHTGIADLDQAY) the chain is on the periplasmic side. A helical transmembrane segment spans residues 277-297 (LTLEPLLSHAAATVFGLSLVA). At 298–327 (AGLSSTVVGTLAGQVVMQGFVRFHIPLWVR) the chain is on the cytoplasmic side. The helical transmembrane segment at 328–344 (RSITMLPSFIVILMGLD) threads the bilayer. The Periplasmic segment spans residues 345 to 350 (PTRILV). A helical transmembrane segment spans residues 351 to 370 (MSQVLLSFGIALALVPLLIF). Residues 371–387 (TSNATLMGELVNTRRVK) are Cytoplasmic-facing. Residues 388-406 (QIGWIIVVLVVALNIWLLV) form a helical membrane-spanning segment. Over 407-413 (GTVMGLS) the chain is Periplasmic.

The protein belongs to the NRAMP family.

The protein resides in the cell inner membrane. H(+)-stimulated, divalent metal cation uptake system. This Salmonella gallinarum (strain 287/91 / NCTC 13346) protein is Divalent metal cation transporter MntH.